We begin with the raw amino-acid sequence, 145 residues long: MATDQHSNKSNVSAARKPLSPSPTASAAGLIKINGSPIELVEPEILRFKAFEPILLLGKSRFAGVDMRIRVKGGGHTSQIYAIRQSIAKALVAFYQKYVDEQSKKEIKDILVRYDRTLLVADPRRCEPKKFGGRGARARFQKSYR.

Residues 1-13 show a composition bias toward polar residues; sequence MATDQHSNKSNVS. Residues 1–24 are disordered; the sequence is MATDQHSNKSNVSAARKPLSPSPT.

It belongs to the universal ribosomal protein uS9 family.

It is found in the cytoplasm. The sequence is that of Small ribosomal subunit protein uS9 (RPS16) from Lupinus polyphyllus (Large-leaved lupine).